Here is a 176-residue protein sequence, read N- to C-terminus: RING-H2 finger protein ATL14 (176 aa).

A disordered region spans residues 1–26; the sequence is MSITIPYDGSISREPSPSPPPPKANT. Residues 37–57 traverse the membrane as a helical segment; it reads FLIGLIMIPVAITAFIFILTS. The RING-type; atypical zinc-finger motif lies at 115-157; that stretch reads CVVCIDGFRQGQWCRKLPRCGHVFHRKCVDLWLIKVSTCPICR.

Belongs to the RING-type zinc finger family. ATL subfamily.

It localises to the membrane. It carries out the reaction S-ubiquitinyl-[E2 ubiquitin-conjugating enzyme]-L-cysteine + [acceptor protein]-L-lysine = [E2 ubiquitin-conjugating enzyme]-L-cysteine + N(6)-ubiquitinyl-[acceptor protein]-L-lysine.. It functions in the pathway protein modification; protein ubiquitination. The protein is RING-H2 finger protein ATL14 (ATL14) of Arabidopsis thaliana (Mouse-ear cress).